Reading from the N-terminus, the 372-residue chain is Lipoyl synthase, mitochondrial (372 aa).

Positions 106, 111, 117, 137, 141, 144, and 352 each coordinate [4Fe-4S] cluster. Residues 122–341 form the Radical SAM core domain; sequence EYGTATATIM…EKAGNELGFL (220 aa).

It belongs to the radical SAM superfamily. Lipoyl synthase family. It depends on [4Fe-4S] cluster as a cofactor.

It is found in the mitochondrion. It carries out the reaction [[Fe-S] cluster scaffold protein carrying a second [4Fe-4S](2+) cluster] + N(6)-octanoyl-L-lysyl-[protein] + 2 oxidized [2Fe-2S]-[ferredoxin] + 2 S-adenosyl-L-methionine + 4 H(+) = [[Fe-S] cluster scaffold protein] + N(6)-[(R)-dihydrolipoyl]-L-lysyl-[protein] + 4 Fe(3+) + 2 hydrogen sulfide + 2 5'-deoxyadenosine + 2 L-methionine + 2 reduced [2Fe-2S]-[ferredoxin]. It participates in protein modification; protein lipoylation via endogenous pathway; protein N(6)-(lipoyl)lysine from octanoyl-[acyl-carrier-protein]: step 2/2. Its function is as follows. Catalyzes the radical-mediated insertion of two sulfur atoms into the C-6 and C-8 positions of the octanoyl moiety bound to the lipoyl domains of lipoate-dependent enzymes, thereby converting the octanoylated domains into lipoylated derivatives. The protein is Lipoyl synthase, mitochondrial (lias) of Xenopus laevis (African clawed frog).